The sequence spans 720 residues: Methionine--tRNA ligase (720 aa).

Residues 27–37 (PYANGQIHIGH) carry the 'HIGH' region motif. 4 residues coordinate Zn(2+): C158, C161, C171, and C174. Residues 348–352 (KMSKS) carry the 'KMSKS' region motif. K351 provides a ligand contact to ATP. Residues 614–720 (DFAKVDLRIA…SGAKPGMRVK (107 aa)) form the tRNA-binding domain.

This sequence belongs to the class-I aminoacyl-tRNA synthetase family. MetG type 1 subfamily. As to quaternary structure, homodimer. It depends on Zn(2+) as a cofactor.

It is found in the cytoplasm. The catalysed reaction is tRNA(Met) + L-methionine + ATP = L-methionyl-tRNA(Met) + AMP + diphosphate. In terms of biological role, is required not only for elongation of protein synthesis but also for the initiation of all mRNA translation through initiator tRNA(fMet) aminoacylation. This Burkholderia ambifaria (strain MC40-6) protein is Methionine--tRNA ligase.